The following is a 164-amino-acid chain: Ribosome maturation factor RimM (164 aa).

In terms of domain architecture, PRC barrel spans 90–161 (KGSYFIADLI…TVTIKPLEIW (72 aa)).

It belongs to the RimM family. Binds ribosomal protein uS19.

It localises to the cytoplasm. An accessory protein needed during the final step in the assembly of 30S ribosomal subunit, possibly for assembly of the head region. Essential for efficient processing of 16S rRNA. May be needed both before and after RbfA during the maturation of 16S rRNA. It has affinity for free ribosomal 30S subunits but not for 70S ribosomes. This is Ribosome maturation factor RimM from Clostridium botulinum (strain Langeland / NCTC 10281 / Type F).